We begin with the raw amino-acid sequence, 230 residues long: Demethylmenaquinone methyltransferase (230 aa).

S-adenosyl-L-methionine contacts are provided by residues Thr62, Asp80, Asp100 to Gly101, and Ser117.

Belongs to the class I-like SAM-binding methyltransferase superfamily. MenG/UbiE family.

The enzyme catalyses a 2-demethylmenaquinol + S-adenosyl-L-methionine = a menaquinol + S-adenosyl-L-homocysteine + H(+). It participates in quinol/quinone metabolism; menaquinone biosynthesis; menaquinol from 1,4-dihydroxy-2-naphthoate: step 2/2. Its function is as follows. Methyltransferase required for the conversion of demethylmenaquinol (DMKH2) to menaquinol (MKH2). This is Demethylmenaquinone methyltransferase from Corynebacterium glutamicum (strain ATCC 13032 / DSM 20300 / JCM 1318 / BCRC 11384 / CCUG 27702 / LMG 3730 / NBRC 12168 / NCIMB 10025 / NRRL B-2784 / 534).